Here is a 417-residue protein sequence, read N- to C-terminus: 1-deoxy-D-xylulose 5-phosphate reductoisomerase (417 aa).

Thr10, Gly11, Ser12, Ile13, Gly36, Arg37, Asn38, and Asn130 together coordinate NADPH. Lys131 provides a ligand contact to 1-deoxy-D-xylulose 5-phosphate. Glu132 serves as a coordination point for NADPH. Asp156 contributes to the Mn(2+) binding site. Residues Ser157, Glu158, Ser194, and His217 each coordinate 1-deoxy-D-xylulose 5-phosphate. Glu158 lines the Mn(2+) pocket. Position 223 (Gly223) interacts with NADPH. 4 residues coordinate 1-deoxy-D-xylulose 5-phosphate: Ser230, Asn235, Lys236, and Glu239. Glu239 is a binding site for Mn(2+).

The protein belongs to the DXR family. Requires Mg(2+) as cofactor. The cofactor is Mn(2+).

The catalysed reaction is 2-C-methyl-D-erythritol 4-phosphate + NADP(+) = 1-deoxy-D-xylulose 5-phosphate + NADPH + H(+). Its pathway is isoprenoid biosynthesis; isopentenyl diphosphate biosynthesis via DXP pathway; isopentenyl diphosphate from 1-deoxy-D-xylulose 5-phosphate: step 1/6. Functionally, catalyzes the NADPH-dependent rearrangement and reduction of 1-deoxy-D-xylulose-5-phosphate (DXP) to 2-C-methyl-D-erythritol 4-phosphate (MEP). The protein is 1-deoxy-D-xylulose 5-phosphate reductoisomerase of Synechococcus sp. (strain CC9902).